A 387-amino-acid chain; its full sequence is Succinyl-diaminopimelate desuccinylase (387 aa).

His-74 is a binding site for Zn(2+). The active site involves Asp-76. Asp-107 contributes to the Zn(2+) binding site. Catalysis depends on Glu-142, which acts as the Proton acceptor. Glu-143, Glu-171, and His-360 together coordinate Zn(2+).

The protein belongs to the peptidase M20A family. DapE subfamily. As to quaternary structure, homodimer. It depends on Zn(2+) as a cofactor. Requires Co(2+) as cofactor.

It carries out the reaction N-succinyl-(2S,6S)-2,6-diaminopimelate + H2O = (2S,6S)-2,6-diaminopimelate + succinate. It participates in amino-acid biosynthesis; L-lysine biosynthesis via DAP pathway; LL-2,6-diaminopimelate from (S)-tetrahydrodipicolinate (succinylase route): step 3/3. Catalyzes the hydrolysis of N-succinyl-L,L-diaminopimelic acid (SDAP), forming succinate and LL-2,6-diaminopimelate (DAP), an intermediate involved in the bacterial biosynthesis of lysine and meso-diaminopimelic acid, an essential component of bacterial cell walls. The polypeptide is Succinyl-diaminopimelate desuccinylase (Rhodopseudomonas palustris (strain BisA53)).